The chain runs to 255 residues: Acetylglutamate kinase (255 aa).

Residues 40-41, Arg-62, and Asn-153 contribute to the substrate site; that span reads GG.

It belongs to the acetylglutamate kinase family. ArgB subfamily.

Its subcellular location is the cytoplasm. It catalyses the reaction N-acetyl-L-glutamate + ATP = N-acetyl-L-glutamyl 5-phosphate + ADP. It functions in the pathway amino-acid biosynthesis; L-arginine biosynthesis; N(2)-acetyl-L-ornithine from L-glutamate: step 2/4. Functionally, catalyzes the ATP-dependent phosphorylation of N-acetyl-L-glutamate. In Bacillus cereus (strain ATCC 14579 / DSM 31 / CCUG 7414 / JCM 2152 / NBRC 15305 / NCIMB 9373 / NCTC 2599 / NRRL B-3711), this protein is Acetylglutamate kinase.